The sequence spans 239 residues: Probable transcriptional regulatory protein CD630_07950 (239 aa).

Belongs to the TACO1 family.

It is found in the cytoplasm. This Clostridioides difficile (strain 630) (Peptoclostridium difficile) protein is Probable transcriptional regulatory protein CD630_07950.